A 465-amino-acid polypeptide reads, in one-letter code: UDP-N-acetylmuramate--L-alanine ligase (465 aa).

Gly-112–Thr-118 contacts ATP.

The protein belongs to the MurCDEF family.

It is found in the cytoplasm. The enzyme catalyses UDP-N-acetyl-alpha-D-muramate + L-alanine + ATP = UDP-N-acetyl-alpha-D-muramoyl-L-alanine + ADP + phosphate + H(+). It functions in the pathway cell wall biogenesis; peptidoglycan biosynthesis. Cell wall formation. In Burkholderia thailandensis (strain ATCC 700388 / DSM 13276 / CCUG 48851 / CIP 106301 / E264), this protein is UDP-N-acetylmuramate--L-alanine ligase.